Consider the following 319-residue polypeptide: NADH-quinone oxidoreductase subunit H 1 (319 aa).

Helical transmembrane passes span Met1–Val21, Ile77–Gly97, Val107–Ala127, Leu147–Leu167, Val179–Ala199, Leu214–Glu234, Val238–Leu258, Ile262–Leu282, and Phe293–Val313.

Belongs to the complex I subunit 1 family. As to quaternary structure, NDH-1 is composed of 14 different subunits. Subunits NuoA, H, J, K, L, M, N constitute the membrane sector of the complex.

The protein resides in the cell inner membrane. The enzyme catalyses a quinone + NADH + 5 H(+)(in) = a quinol + NAD(+) + 4 H(+)(out). Its function is as follows. NDH-1 shuttles electrons from NADH, via FMN and iron-sulfur (Fe-S) centers, to quinones in the respiratory chain. The immediate electron acceptor for the enzyme in this species is believed to be ubiquinone. Couples the redox reaction to proton translocation (for every two electrons transferred, four hydrogen ions are translocated across the cytoplasmic membrane), and thus conserves the redox energy in a proton gradient. This subunit may bind ubiquinone. In Rhodopseudomonas palustris (strain HaA2), this protein is NADH-quinone oxidoreductase subunit H 1.